Consider the following 500-residue polypeptide: NAD(P)H-quinone oxidoreductase chain 4, chloroplastic (500 aa).

The next 14 membrane-spanning stretches (helical) occupy residues 4–24, 37–57, 84–104, 111–129, 134–154, 167–187, 208–228, 242–262, 272–292, 305–325, 330–350, 374–396, 416–436, and 462–482; these read FPWLTIIVVLPIFAGSSIFFF, ICICLLELLLTTYAFCYHFQL, GLSIGPILLTGFITTLATLAA, SRLFHFLMLAMYSGQIGSF, LLLFFIMWELELIPVYLLLSM, FILYTAGGSIFLLMGVPGMGL, ALEIIFYFGFLIAYAVKSPII, HYSTCMLLAGILLKMGAYGLV, AHSIFSPWLMIVGTIQIIYAA, IAYSSVSHMGFTIIGIGSITD, GAILQIISHGFIGAALFFLAG, IFTMFSSFSMASLALPGMSGFVA, ILITFVMAIGMILTPIYSLSM, and LFVSICIFLPVIGIGIYPDFV.

The protein belongs to the complex I subunit 4 family.

Its subcellular location is the plastid. It is found in the chloroplast thylakoid membrane. The catalysed reaction is a plastoquinone + NADH + (n+1) H(+)(in) = a plastoquinol + NAD(+) + n H(+)(out). It catalyses the reaction a plastoquinone + NADPH + (n+1) H(+)(in) = a plastoquinol + NADP(+) + n H(+)(out). This is NAD(P)H-quinone oxidoreductase chain 4, chloroplastic from Liriodendron tulipifera (Tuliptree).